The following is a 1088-amino-acid chain: DNA polymerase II large subunit (1088 aa).

It belongs to the archaeal DNA polymerase II family. As to quaternary structure, heterodimer of a large subunit and a small subunit.

The enzyme catalyses DNA(n) + a 2'-deoxyribonucleoside 5'-triphosphate = DNA(n+1) + diphosphate. The catalysed reaction is Exonucleolytic cleavage in the 3'- to 5'-direction to yield nucleoside 5'-phosphates.. Its function is as follows. Possesses two activities: a DNA synthesis (polymerase) and an exonucleolytic activity that degrades single-stranded DNA in the 3'- to 5'-direction. Has a template-primer preference which is characteristic of a replicative DNA polymerase. This Thermoplasma volcanium (strain ATCC 51530 / DSM 4299 / JCM 9571 / NBRC 15438 / GSS1) protein is DNA polymerase II large subunit (polC).